A 728-amino-acid chain; its full sequence is Propionyl-CoA carboxylase alpha chain, mitochondrial (728 aa).

A mitochondrion-targeting transit peptide spans 1-52 (MAGFWVGTAPLVAAGRRGRWPPQQLMLSAALRTLKHVLYYSRQCLMVSRNLG). In terms of domain architecture, Biotin carboxylation spans 62 to 509 (TFDKILVANR…STKFLSDVYP (448 aa)). Residue Lys65 is modified to N6-acetyllysine; alternate. At Lys65 the chain carries N6-succinyllysine; alternate. Lys119 is subject to N6-succinyllysine. Lys150 carries the post-translational modification N6-acetyllysine; alternate. Lys150 is modified (N6-succinyllysine; alternate). Lys177 contributes to the ATP binding site. The ATP-grasp domain maps to 181-378 (KLLAKKAEVN…LVQEMIRVAK (198 aa)). Position 200 is an N6-acetyllysine; alternate (Lys200). Lys200 is subject to N6-succinyllysine; alternate. ATP-binding positions include 209–270 (AREI…PRHI), Glu261, and Asn296. A Phosphoserine modification is found at Ser252. Lys262 bears the N6-succinyllysine mark. Lys328 bears the N6-acetyllysine; alternate mark. Lys328 is modified (N6-succinyllysine; alternate). Residues Glu336, Glu349, and Asn351 each coordinate Mg(2+). Residues Glu336, Glu349, and Asn351 each contribute to the Mn(2+) site. Residue Glu349 is part of the active site. N6-succinyllysine is present on residues Lys385 and Lys407. Biotin is bound at residue Phe409. Residue Lys496 is modified to N6-acetyllysine. An N6-succinyllysine mark is found at Lys502, Lys513, and Lys648. One can recognise a Biotinyl-binding domain in the interval 653–728 (KVTEDTSSVL…GEGDLLVELE (76 aa)). Position 694 is an N6-biotinyllysine; by HLCS (Lys694).

In terms of assembly, the holoenzyme is a dodecamer composed of 6 PCCA/alpha subunits and 6 PCCB/beta subunits. Interacts (via the biotin carboxylation domain) with SIRT4. Interacts with SIRT3 and SIRT5. The cofactor is Mg(2+). It depends on Mn(2+) as a cofactor. Biotin serves as cofactor. In terms of processing, acetylated. The biotin cofactor is covalently attached to the C-terminal biotinyl-binding domain and is required for the catalytic activity. Biotinylation is catalyzed by HLCS.

The protein resides in the mitochondrion matrix. It carries out the reaction propanoyl-CoA + hydrogencarbonate + ATP = (S)-methylmalonyl-CoA + ADP + phosphate + H(+). It catalyses the reaction butanoyl-CoA + hydrogencarbonate + ATP = (2S)-ethylmalonyl-CoA + ADP + phosphate + H(+). It participates in metabolic intermediate metabolism; propanoyl-CoA degradation; succinyl-CoA from propanoyl-CoA: step 1/3. This is one of the 2 subunits of the biotin-dependent propionyl-CoA carboxylase (PCC), a mitochondrial enzyme involved in the catabolism of odd chain fatty acids, branched-chain amino acids isoleucine, threonine, methionine, and valine and other metabolites. Propionyl-CoA carboxylase catalyzes the carboxylation of propionyl-CoA/propanoyl-CoA to D-methylmalonyl-CoA/(S)-methylmalonyl-CoA. Within the holoenzyme, the alpha subunit catalyzes the ATP-dependent carboxylation of the biotin carried by the biotin carboxyl carrier (BCC) domain, while the beta subunit then transfers the carboxyl group from carboxylated biotin to propionyl-CoA. Propionyl-CoA carboxylase also significantly acts on butyryl-CoA/butanoyl-CoA, which is converted to ethylmalonyl-CoA/(2S)-ethylmalonyl-CoA at a much lower rate. Other alternative minor substrates include (2E)-butenoyl-CoA/crotonoyl-CoA. The polypeptide is Propionyl-CoA carboxylase alpha chain, mitochondrial (Homo sapiens (Human)).